The primary structure comprises 858 residues: Neurofilament medium polypeptide (858 aa).

Residue serine 2 is modified to N-acetylserine. Positions 2-99 (SYTMEPLGNP…KLSRSNEKEQ (98 aa)) are head. The interval 22 to 57 (ATYSRASASPSSGFRSQSWSRGSGSTVSSSYKRTNL) is disordered. Over residues 30-54 (SPSSGFRSQSWSRGSGSTVSSSYKR) the composition is skewed to low complexity. Threonine 47 is a glycosylation site (O-linked (GlcNAc) threonine). The 312-residue stretch at 96–407 (EKEQLQGLND…KLLEGEETRF (312 aa)) folds into the IF rod domain. The coil 1A stretch occupies residues 100 to 131 (LQGLNDRFAGYIEKVHYLEQQNKEIEAELAAL). Positions 132 to 144 (RQKHAGRAQLGDA) are linker 1. The interval 145 to 243 (YEQELRELRG…EEEVAELLAQ (99 aa)) is coil 1B. The interval 244-260 (LQASHATVERKDYLKTD) is linker 12. A coil 2A region spans residues 261 to 282 (LTTALKEIRAQLECQSDHNMHQ). Residues 283–286 (AEEW) are linker 2. A coil 2B region spans residues 287 to 407 (FKCRYAKLTE…KLLEGEETRF (121 aa)). The tail stretch occupies residues 408-858 (SAFSGSITGP…SHAVVKEIKE (451 aa)). Threonine 427 is a glycosylation site (O-linked (GlcNAc) threonine). Residues 478–788 (AAKAQEEEQE…VVTNGLDVSP (311 aa)) form a disordered region. Acidic residues-rich tracts occupy residues 484 to 500 (EEQEEEKAEEEAVEEEA) and 509 to 524 (AAEEEEKEEEEAEEEE). A compositionally biased stretch (basic and acidic residues) spans 525–541 (AAKSDAAEEGGSKKEEI). A compositionally biased stretch (acidic residues) spans 542-555 (EEKEEGEEAEEEEA). A compositionally biased stretch (basic and acidic residues) spans 556-572 (EAKGKAEEAGAKVEKVK). The segment covering 576 to 586 (AKSPPKSPPKS) has biased composition (pro residues). The segment covering 590–601 (EQAKAVQKAAAE) has biased composition (low complexity). The segment covering 602-623 (VGKDQKAEKAAEKAAKEEKAAS) has biased composition (basic and acidic residues). The segment covering 624–637 (PEKPATPKVTSPEK) has biased composition (low complexity). Composition is skewed to basic and acidic residues over residues 651–664 (ITPEKVRSPEKPTT) and 675–727 (ASPE…KAVV). A compositionally biased stretch (low complexity) spans 728 to 743 (EESITVTKVTKVTAEV). Residues 744–771 (EVSKEARKEDIAVNGEVEEKKDEAKEKE) show a composition bias toward basic and acidic residues.

The protein belongs to the intermediate filament family. There are a number of repeats of the tripeptide K-S-P, NFM is phosphorylated on a number of the serines in this motif. It is thought that phosphorylation of NFM results in the formation of interfilament cross bridges that are important in the maintenance of axonal caliber. In terms of processing, phosphorylation seems to play a major role in the functioning of the larger neurofilament polypeptides (NF-M and NF-H), the levels of phosphorylation being altered developmentally and coincident with a change in the neurofilament function.

Its subcellular location is the cytoplasm. It localises to the cytoskeleton. It is found in the cell projection. The protein localises to the axon. Its function is as follows. Neurofilaments usually contain three intermediate filament proteins: NEFL, NEFM, and NEFH which are involved in the maintenance of neuronal caliber. May additionally cooperate with other neuronal intermediate filament proteins to form neuronal filamentous networks. The polypeptide is Neurofilament medium polypeptide (NEFM) (Gallus gallus (Chicken)).